A 296-amino-acid chain; its full sequence is L-isoleucine 3(1)-dioxygenase (296 aa).

Positions 176, 178, and 267 each coordinate Fe cation.

The protein belongs to the iron/ascorbate-dependent oxidoreductase family. L-ascorbate serves as cofactor. Requires Fe(2+) as cofactor.

It carries out the reaction L-isoleucine + 2-oxoglutarate + O2 = 3(1)-hydroxy-L-isoleucine + succinate + CO2. Its function is as follows. Catalyzes the hydroxylation of L-isoleucine at the C-4' position to form L-4'-hydroxyisoleucine (4'-HIL). Exhibits low activity with L-valine and L-methionine. In Pantoea ananatis (strain AJ13355), this protein is L-isoleucine 3(1)-dioxygenase.